Reading from the N-terminus, the 501-residue chain is MSNEEINIHEAEEQLSEQEMLRRQKLVELQEAGKDPFDVYKVERTHSSADVKDNFEELEGKEVKVAGRLMSKRGQGKVVFADLADLPGKIQLFIKIDNVGEEALKEFKTFDLGDWVAATGEVFKTKMGEVSIKVTSFELICKSLKPLPEKWHGLKDPDLRYRQREVDIITNPEVKDTFIKRSQIVKAIREFLDNRGFLEVDTPILSPIAGGAAARPFITHHNALDIDMYLRIATELYLKRLIVAGFEKVYEMGKNFRNEGVSVRHNPEFTAIELYEAYADYNDMMEIMENMIAYVCEKVNGSTKVTYEGTEIDFTPPWRRITMVDAVKEFAGIDFNEIKSDEEAQAIAKEKNLEFPKPLDKVTKGEVLNMLFEEYGEDKLIQPTFLVDYPVEISPLTKKKRGNEMFTERFEGFVYGREVCNAYSELNDPIVQRERFEQQAREREYGDDEAYMLDEEFMSALETGMPPTGGLGIGIDRMIMFLTDSSSIRDVILFPTMKPQK.

Mg(2+) contacts are provided by E411 and E418.

This sequence belongs to the class-II aminoacyl-tRNA synthetase family. In terms of assembly, homodimer. Requires Mg(2+) as cofactor.

It localises to the cytoplasm. The catalysed reaction is tRNA(Lys) + L-lysine + ATP = L-lysyl-tRNA(Lys) + AMP + diphosphate. This Clostridium perfringens (strain SM101 / Type A) protein is Lysine--tRNA ligase.